The primary structure comprises 429 residues: Chaperone SurA (429 aa).

The N-terminal stretch at 1 to 18 (MFKRIALVCALFSGVCFA) is a signal peptide. PpiC domains follow at residues 170 to 271 (NLTY…KLVA) and 281 to 380 (ITQT…EVIA).

The protein localises to the periplasm. It catalyses the reaction [protein]-peptidylproline (omega=180) = [protein]-peptidylproline (omega=0). In terms of biological role, chaperone involved in the correct folding and assembly of outer membrane proteins. Recognizes specific patterns of aromatic residues and the orientation of their side chains, which are found more frequently in integral outer membrane proteins. May act in both early periplasmic and late outer membrane-associated steps of protein maturation. This is Chaperone SurA from Legionella pneumophila (strain Lens).